The following is a 326-amino-acid chain: NADH-specific methylglyoxal reductase (326 aa).

NAD(+) contacts are provided by residues 20–21 (TW) and Asp54. The active-site Proton donor is the Tyr59. Residues Gln189, 217-222 (YSPLEQ), Gly291, and Gln297 each bind NAD(+).

The protein belongs to the aldo/keto reductase family. Aldo/keto reductase 11 subfamily. In terms of assembly, monomer.

The catalysed reaction is hydroxyacetone + NAD(+) = methylglyoxal + NADH + H(+). Catalyzes the NADH-dependent reduction of methylglyoxal (2-oxopropanal) in vitro. It is not known if this activity has physiological significance. Cannot use NADPH as a cosubstrate. Seems to play some role in intestinal colonization. In Escherichia coli (strain K12), this protein is NADH-specific methylglyoxal reductase (ydjG).